The chain runs to 206 residues: Holliday junction branch migration complex subunit RuvA (206 aa).

The interval 1 to 64 (MIGKLKGVLD…EDMIRLYGFR (64 aa)) is domain I. The interval 65–144 (TVLEREWFRL…AFAGEAAGAI (80 aa)) is domain II. The segment at 145-154 (GLKQDLGEGV) is flexible linker. The domain III stretch occupies residues 154–206 (VAPAPVSDAVSALANLGYSRDIAANAVAAALKSAGEGADTGTLIRLGLKELAR).

The protein belongs to the RuvA family. As to quaternary structure, homotetramer. Forms an RuvA(8)-RuvB(12)-Holliday junction (HJ) complex. HJ DNA is sandwiched between 2 RuvA tetramers; dsDNA enters through RuvA and exits via RuvB. An RuvB hexamer assembles on each DNA strand where it exits the tetramer. Each RuvB hexamer is contacted by two RuvA subunits (via domain III) on 2 adjacent RuvB subunits; this complex drives branch migration. In the full resolvosome a probable DNA-RuvA(4)-RuvB(12)-RuvC(2) complex forms which resolves the HJ.

The protein localises to the cytoplasm. Functionally, the RuvA-RuvB-RuvC complex processes Holliday junction (HJ) DNA during genetic recombination and DNA repair, while the RuvA-RuvB complex plays an important role in the rescue of blocked DNA replication forks via replication fork reversal (RFR). RuvA specifically binds to HJ cruciform DNA, conferring on it an open structure. The RuvB hexamer acts as an ATP-dependent pump, pulling dsDNA into and through the RuvAB complex. HJ branch migration allows RuvC to scan DNA until it finds its consensus sequence, where it cleaves and resolves the cruciform DNA. The protein is Holliday junction branch migration complex subunit RuvA of Chelativorans sp. (strain BNC1).